The sequence spans 337 residues: Putative 2-aminoethylphosphonate-binding periplasmic protein (337 aa).

The first 21 residues, 1–21 (MKLSRLALLSVFALASAPSWA), serve as a signal peptide directing secretion.

This sequence belongs to the bacterial solute-binding protein 1 family.

It localises to the periplasm. Probably part of the PhnSTUV complex (TC 3.A.1.11.5) involved in 2-aminoethylphosphonate import. In Salmonella paratyphi A (strain ATCC 9150 / SARB42), this protein is Putative 2-aminoethylphosphonate-binding periplasmic protein (phnS).